The following is a 363-amino-acid chain: Spermidine/putrescine import ATP-binding protein PotA 2 (363 aa).

In terms of domain architecture, ABC transporter spans 6-236; sequence LEIRNVTRRF…PRSRFVADFI (231 aa). 38–45 contacts ATP; it reads GPSGCGKT.

It belongs to the ABC transporter superfamily. Spermidine/putrescine importer (TC 3.A.1.11.1) family. In terms of assembly, the complex is composed of two ATP-binding proteins (PotA), two transmembrane proteins (PotB and PotC) and a solute-binding protein (PotD).

It is found in the cell inner membrane. It catalyses the reaction ATP + H2O + polyamine-[polyamine-binding protein]Side 1 = ADP + phosphate + polyamineSide 2 + [polyamine-binding protein]Side 1.. Part of the ABC transporter complex PotABCD involved in spermidine/putrescine import. Responsible for energy coupling to the transport system. This Pseudomonas aeruginosa (strain ATCC 15692 / DSM 22644 / CIP 104116 / JCM 14847 / LMG 12228 / 1C / PRS 101 / PAO1) protein is Spermidine/putrescine import ATP-binding protein PotA 2.